The following is a 244-amino-acid chain: Tegument protein UL51 homolog (244 aa).

Cys-10 is lipidated: S-palmitoyl cysteine; by host.

The protein belongs to the herpesviridae UL51 family. In terms of assembly, oligomerizes. Interacts with ORF55; this interaction mediates ORF55 incorporation to virions. Post-translationally, phosphorylated. Palmitoylation is necessary for Golgi localization.

The protein resides in the virion tegument. It localises to the host cytoplasm. It is found in the host Golgi apparatus. Functionally, plays several roles during the time course of infection, including egress of virus particles from the perinuclear space and secondary envelopment of cytoplasmic capsids that bud into specific trans-Golgi network (TGN)-derived membranes. The chain is Tegument protein UL51 homolog (8) from Equus caballus (Horse).